We begin with the raw amino-acid sequence, 179 residues long: Large ribosomal subunit protein uL5 (179 aa).

This sequence belongs to the universal ribosomal protein uL5 family. In terms of assembly, part of the 50S ribosomal subunit; part of the 5S rRNA/L5/L18/L25 subcomplex. Contacts the 5S rRNA and the P site tRNA. Forms a bridge to the 30S subunit in the 70S ribosome.

In terms of biological role, this is one of the proteins that bind and probably mediate the attachment of the 5S RNA into the large ribosomal subunit, where it forms part of the central protuberance. In the 70S ribosome it contacts protein S13 of the 30S subunit (bridge B1b), connecting the 2 subunits; this bridge is implicated in subunit movement. Contacts the P site tRNA; the 5S rRNA and some of its associated proteins might help stabilize positioning of ribosome-bound tRNAs. The chain is Large ribosomal subunit protein uL5 from Shewanella denitrificans (strain OS217 / ATCC BAA-1090 / DSM 15013).